Consider the following 431-residue polypeptide: MKNYIEIVDVYARQILDSRCNPTVEVEVELEDGTVGVAAVPSGASTGAFEAVELRDGDESKYLGKGVLKAVDNVNTIIADELVGMNVLDQVAIDKTMIELDGTDNKAKLGANAMLGVSLACAKAAANFLGMSLYQYIGGVNAKVLPVPMMNIINGGKHADNNVDLQEFMIMPAGAPSFSEALRMCSEVYHALKSTLKSQGYDTGVGDEGGFAPNLKSNEEAIVVIIEAIKKAGYTPGKDIFIALDPASSEIFEDGKYNLAGEGRVLTPEEMANYYVELAEKYPIISIEDGMAEEDWDGWKILTEKIGDKVQLVGDDLFVTNTERLAKGIKLGVANSILIKLNQIGTLTETLNAIEMAERAGYTAVVSHRSGETEDTTIADLVVAVNAGQIKTGAPARSERVAKYNQLLRIEEELNDMGEYRGLKAFYNINK.

Residue Gln166 coordinates (2R)-2-phosphoglycerate. Glu208 acts as the Proton donor in catalysis. Mg(2+) is bound by residues Asp245, Glu288, and Asp315. Positions 340, 369, 370, and 391 each coordinate (2R)-2-phosphoglycerate. The active-site Proton acceptor is Lys340.

This sequence belongs to the enolase family. Requires Mg(2+) as cofactor.

It is found in the cytoplasm. It localises to the secreted. Its subcellular location is the cell surface. The enzyme catalyses (2R)-2-phosphoglycerate = phosphoenolpyruvate + H2O. The protein operates within carbohydrate degradation; glycolysis; pyruvate from D-glyceraldehyde 3-phosphate: step 4/5. Catalyzes the reversible conversion of 2-phosphoglycerate (2-PG) into phosphoenolpyruvate (PEP). It is essential for the degradation of carbohydrates via glycolysis. This chain is Enolase, found in Clostridium botulinum (strain Loch Maree / Type A3).